Reading from the N-terminus, the 176-residue chain is Transmembrane protein 238 (176 aa).

Positions Met1–Pro21 are disordered. At Met1–Met36 the chain is on the cytoplasmic side. Positions Gly9–Ser19 are enriched in low complexity. A helical transmembrane segment spans residues Ala37–Phe57. Over Ala58–Asp69 the chain is Extracellular. Residues Leu70–Tyr90 form a helical membrane-spanning segment. Residues Thr91 to Glu176 lie on the Cytoplasmic side of the membrane. The segment covering Ser124–Ala135 has biased composition (low complexity). A disordered region spans residues Ser124–Arg156. Ser175 is subject to Phosphoserine.

The protein resides in the membrane. This is Transmembrane protein 238 (Tmem238) from Mus musculus (Mouse).